A 183-amino-acid polypeptide reads, in one-letter code: MKNVTHSFVFLAHWPFAGSFGLNTDILATNLINLTVVVGVLIFFGKGVLKDLLDNRKQRILSTIRNSEELRKGTLEQLEKARIRLQKVELEADEYRMNGYSEIEREKENLINATSISLEQLEKSKNETLYFEKQRAMNQVRQQGFQQAVQGALGTLNSCLNTELHFRTIRANIGILGAIEWKR.

Residues aspartate 25 to glycine 45 form a helical membrane-spanning segment.

This sequence belongs to the ATPase B chain family. F-type ATPases have 2 components, F(1) - the catalytic core - and F(0) - the membrane proton channel. F(1) has five subunits: alpha(3), beta(3), gamma(1), delta(1), epsilon(1). F(0) has four main subunits: a(1), b(1), b'(1) and c(10-14). The alpha and beta chains form an alternating ring which encloses part of the gamma chain. F(1) is attached to F(0) by a central stalk formed by the gamma and epsilon chains, while a peripheral stalk is formed by the delta, b and b' chains.

It is found in the plastid. It localises to the chloroplast thylakoid membrane. F(1)F(0) ATP synthase produces ATP from ADP in the presence of a proton or sodium gradient. F-type ATPases consist of two structural domains, F(1) containing the extramembraneous catalytic core and F(0) containing the membrane proton channel, linked together by a central stalk and a peripheral stalk. During catalysis, ATP synthesis in the catalytic domain of F(1) is coupled via a rotary mechanism of the central stalk subunits to proton translocation. In terms of biological role, component of the F(0) channel, it forms part of the peripheral stalk, linking F(1) to F(0). The sequence is that of ATP synthase subunit b, chloroplastic from Zea mays (Maize).